Reading from the N-terminus, the 142-residue chain is Photosystem II extrinsic protein U (142 aa).

The signal sequence occupies residues 1-29 (MKGLVRLLTVFSLLLGCWGWLGTTQIAQA).

The protein belongs to the PsbU family. PSII is composed of 1 copy each of membrane proteins PsbA, PsbB, PsbC, PsbD, PsbE, PsbF, PsbH, PsbI, PsbJ, PsbK, PsbL, PsbM, PsbT, PsbX, PsbY, PsbZ, Psb30/Ycf12, peripheral proteins PsbO, CyanoQ (PsbQ), PsbU, PsbV and a large number of cofactors. It forms dimeric complexes.

The protein resides in the cellular thylakoid membrane. Functionally, one of the extrinsic, lumenal subunits of photosystem II (PSII). PSII is a light-driven water plastoquinone oxidoreductase, using light energy to abstract electrons from H(2)O, generating a proton gradient subsequently used for ATP formation. The extrinsic proteins stabilize the structure of photosystem II oxygen-evolving complex (OEC), the ion environment of oxygen evolution and protect the OEC against heat-induced inactivation. The sequence is that of Photosystem II extrinsic protein U from Nostoc sp. (strain PCC 7120 / SAG 25.82 / UTEX 2576).